We begin with the raw amino-acid sequence, 145 residues long: Peptidyl-prolyl cis-trans isomerase (145 aa).

The PPIase cyclophilin-type domain maps to 1-145 (MTQAILETEK…LSVKIVTDAA (145 aa)).

It belongs to the cyclophilin-type PPIase family.

It catalyses the reaction [protein]-peptidylproline (omega=180) = [protein]-peptidylproline (omega=0). PPIases accelerate the folding of proteins. It catalyzes the cis-trans isomerization of proline imidic peptide bonds in oligopeptides. This Synechococcus elongatus (strain ATCC 33912 / PCC 7942 / FACHB-805) (Anacystis nidulans R2) protein is Peptidyl-prolyl cis-trans isomerase (rot).